A 148-amino-acid polypeptide reads, in one-letter code: Arginine repressor (148 aa).

The protein belongs to the ArgR family.

The protein localises to the cytoplasm. It functions in the pathway amino-acid biosynthesis; L-arginine biosynthesis [regulation]. Its function is as follows. Regulates arginine biosynthesis genes. The chain is Arginine repressor from Chlorobium phaeobacteroides (strain BS1).